Reading from the N-terminus, the 310-residue chain is Mitochondrial thiamine pyrophosphate carrier 1 (310 aa).

6 consecutive transmembrane segments (helical) span residues 16–32 (VSPY…GGVA), 88–104 (ILYV…YSAL), 117–141 (IVMP…LTTY), 173–197 (GISG…LMFW), 218–234 (ICGF…TFPL), and 274–291 (GYGV…ISLW). 3 Solcar repeats span residues 16–107 (VSPY…LSKS), 120–205 (PSSV…AREF), and 211–299 (HVPF…VISA).

This sequence belongs to the mitochondrial carrier (TC 2.A.29) family.

Its subcellular location is the mitochondrion inner membrane. Its function is as follows. Mitochondrial transporter that mediates uptake of thiamine pyrophosphate (ThPP) into mitochondria. This Lodderomyces elongisporus (strain ATCC 11503 / CBS 2605 / JCM 1781 / NBRC 1676 / NRRL YB-4239) (Yeast) protein is Mitochondrial thiamine pyrophosphate carrier 1 (TPC1).